Reading from the N-terminus, the 101-residue chain is Small ribosomal subunit protein uS14 (101 aa).

Residues 1–10 are compositionally biased toward basic and acidic residues; sequence MAKKSSIEKN. Residues 1–23 form a disordered region; that stretch reads MAKKSSIEKNNRRRRMNRNAAAK. The span at 11–23 shows a compositional bias: basic residues; sequence NRRRRMNRNAAAK.

Belongs to the universal ribosomal protein uS14 family. As to quaternary structure, part of the 30S ribosomal subunit. Contacts proteins S3 and S10.

In terms of biological role, binds 16S rRNA, required for the assembly of 30S particles and may also be responsible for determining the conformation of the 16S rRNA at the A site. The polypeptide is Small ribosomal subunit protein uS14 (Nitrobacter winogradskyi (strain ATCC 25391 / DSM 10237 / CIP 104748 / NCIMB 11846 / Nb-255)).